The following is a 694-amino-acid chain: Phosphatase and actin regulator 4 (694 aa).

Disordered stretches follow at residues 1–354 (MEDP…SPLV) and 375–405 (QDISQQEDQKTEVPKKIQDQSFGESHIPSRL). Basic residues predominate over residues 45–54 (KPWKWRKKKS). Basic and acidic residues predominate over residues 55 to 84 (SDKFKETSEVLERKISMRKPREELVKRGVL). One copy of the RPEL 1 repeat lies at 63 to 88 (EVLERKISMRKPREELVKRGVLLEDP). A phosphoserine mark is found at Ser-116, Ser-118, Ser-129, and Ser-145. Low complexity-rich tracts occupy residues 184–209 (AGSTARSVSSTSGSTTVTSAATTAAT) and 231–249 (TLPAAPASANTAATTTAPA). The segment covering 250-259 (KQPPIPPPKP) has biased composition (pro residues). Ser-264, Ser-285, Ser-335, and Ser-337 each carry phosphoserine. Over residues 329-352 (LIIPPSSPSPPLPTHIPPEPPRSP) the composition is skewed to pro residues. The segment covering 381-392 (EDQKTEVPKKIQ) has biased composition (basic and acidic residues). A Phosphoserine modification is found at Ser-420. Thr-425 is subject to Phosphothreonine. Phosphoserine is present on residues Ser-436, Ser-446, Ser-457, Ser-503, Ser-505, Ser-549, and Ser-582. The tract at residues 467–562 (VPDDEEEEQT…TNLNSWPRKS (96 aa)) is disordered. Over residues 546-559 (SRPSEPETNLNSWP) the composition is skewed to polar residues. 2 RPEL repeats span residues 575–600 (NTLIRRLSQRPTAEELEQRNILQPKN) and 613–638 (RRLTRKLSQRPTVAELLARKILRFNE). The interval 589–608 (ELEQRNILQPKNEADRQAEK) is disordered. Residue Ser-620 is modified to Phosphoserine.

Belongs to the phosphatase and actin regulator family. As to quaternary structure, binds PPP1CA and actin.

It is found in the cytoplasm. The protein resides in the cell projection. The protein localises to the lamellipodium. In terms of biological role, regulator of protein phosphatase 1 (PP1) required for neural tube and optic fissure closure, and enteric neural crest cell (ENCCs) migration during development. Acts as an activator of PP1 by interacting with PPP1CA and preventing phosphorylation of PPP1CA at 'Thr-320'. During neural tube closure, localizes to the ventral neural tube and activates PP1, leading to down-regulate cell proliferation within cranial neural tissue and the neural retina. Also acts as a regulator of migration of enteric neural crest cells (ENCCs) by activating PP1, leading to dephosphorylation and subsequent activation of cofilin (COF1 or COF2) and repression of the integrin signaling through the RHO/ROCK pathway. The sequence is that of Phosphatase and actin regulator 4 (Phactr4) from Mus musculus (Mouse).